The chain runs to 675 residues: Protein PALS1 (675 aa).

2 disordered regions span residues 1–34 (MTTS…KHRE) and 51–78 (RRSA…KKQE). Positions 1 to 345 (MTTSHMNGHV…QQIKPPPAKE (345 aa)) are required for the correct localization of PALS1 and PATJ at cell-cell contacts and the normal formation of tight junctions and adherens junctions. 2 stretches are compositionally biased toward basic and acidic residues: residues 10 to 34 (VTEE…KHRE) and 54 to 78 (AQLE…KKQE). Ser14 and Ser25 each carry phosphoserine. The interval 21 to 140 (VDLASPEEHQ…LKHIQHTLID (120 aa)) is interaction with PARD6B. Phosphoserine occurs at positions 83 and 84. L27 domains are found at residues 120–177 (KILE…NKAS) and 179–235 (PFPL…MQLE). Residues 181-243 (PLISNAQDLA…LEPITDERVY (63 aa)) are interaction with LIN7C. Positions 256-336 (IVRIEKARDI…TLTFVLIPSQ (81 aa)) constitute a PDZ domain. Residues 345-417 (ETVIHVKAHF…PGKSFQQQRE (73 aa)) enclose the SH3 domain. The 182-residue stretch at 479 to 660 (KRPIILIGPQ…AYQELLRLIN (182 aa)) folds into the Guanylate kinase-like domain. Position 486–493 (486–493 (GPQNCGQN)) interacts with ATP.

Belongs to the MAGUK family. As to quaternary structure, heterodimer with MPP1. Forms a heterotrimeric complex composed of PALS1, LIN7B and PATJ; the N-terminal L27 domain of PALS1 interacts with the L27 domain of PATJ and the C-terminal L27 domain of PALS1 interacts with the L27 domain of LIN7B. Component of a complex composed of PALS1, CRB1 and MPP4. Component of a complex whose core is composed of ARHGAP17, AMOT, PALS1, PATJ and PARD3/PAR3. Component of a complex composed of PALS1, CRB1 and EPB41L5. Within the complex, interacts (via HOOK domain) with EPB41L5 (via FERM domain), and interacts with CRB1 (via intracellular domain). Component of a complex composed of PALS1, MPP3 and CRB1; PALS1 acts as a bridging protein between MPP3 (via guanylate kinase-like domain) and CRB1. Component of a complex composed of CRB3, PALS1 and PATJ. As part of the Crumbs complex; interacts with WWP1, the interaction is enhanced by AMOTL2 and facilitates WWP1 localization to the plasma membrane. The Crumbs complex promotes monoubiquitination of AMOTL2 by WWP1, which activates the Hippo signaling pathway. Interacts (via PDZ domain) with PATJ (via N-terminus). Interacts with EZR. Interacts (via PDZ domain) with CRB1 (via C-terminal ERLI motif). While the PDZ domain is sufficient for interaction with CRB1, the adjacent SH3 and guanylate kinase-like domains are likely to contribute to a high affinity interaction. Interacts with WWTR1/TAZ (via WW domain). Interacts with MPP7. Interacts (via PDZ domain) with CRB3 (via C-terminus). Interacts with LIN7C. Interacts with MPDZ. Interacts with PARD6B. Interacts with SC6A1. Interacts with CDH5; the interaction promotes PALS1 localization to cell junctions and is required for CDH5-mediated vascular lumen formation and endothelial cell. Interacts with NPHP1 (via coiled coil and SH3 domains). Interacts with NPHP4. Interacts with CRB2.

The protein localises to the golgi apparatus. It localises to the cell membrane. The protein resides in the endomembrane system. Its subcellular location is the cell junction. It is found in the tight junction. The protein localises to the adherens junction. It localises to the cell projection. The protein resides in the axon. Its subcellular location is the perikaryon. It is found in the apical cell membrane. Functionally, plays a role in tight junction biogenesis and in the establishment of cell polarity in epithelial cells. Also involved in adherens junction biogenesis by ensuring correct localization of the exocyst complex protein EXOC4/SEC8 which allows trafficking of adherens junction structural component CDH1 to the cell surface. Plays a role through its interaction with CDH5 in vascular lumen formation and endothelial membrane polarity. Required during embryonic and postnatal retinal development. Required for the maintenance of cerebellar progenitor cells in an undifferentiated proliferative state, preventing premature differentiation, and is required for cerebellar histogenesis, fissure formation, cerebellar layer organization and cortical development. Plays a role in neuronal progenitor cell survival, potentially via promotion of mTOR signaling. Plays a role in the radial and longitudinal extension of the myelin sheath in Schwann cells. May modulate SC6A1/GAT1-mediated GABA uptake by stabilizing the transporter. May play a role in the T-cell receptor-mediated activation of NF-kappa-B. Required for localization of EZR to the apical membrane of parietal cells and may play a role in the dynamic remodeling of the apical cytoskeleton. Required for the normal polarized localization of the vesicular marker STX4. Required for the correct trafficking of the myelin proteins PMP22 and MAG. Involved in promoting phosphorylation and cytoplasmic retention of transcriptional coactivators YAP1 and WWTR1/TAZ which leads to suppression of TGFB1-dependent transcription of target genes such as CCN2/CTGF, SERPINE1/PAI1, SNAI1/SNAIL1 and SMAD7. This Pongo abelii (Sumatran orangutan) protein is Protein PALS1.